The primary structure comprises 312 residues: Bifunctional pinoresinol-lariciresinol reductase (312 aa).

NADP(+)-binding positions include 11–17, R36, and K45; that span reads GGTGYIG. The Proton acceptor role is filled by K138. R142 serves as a coordination point for NADP(+). H270 lines the substrate pocket.

The protein belongs to the NmrA-type oxidoreductase family. Isoflavone reductase subfamily. As to quaternary structure, dimer.

It carries out the reaction (+)-lariciresinol + NADP(+) = (+)-pinoresinol + NADPH + H(+). The catalysed reaction is (-)-secoisolariciresinol + NADP(+) = (+)-lariciresinol + NADPH + H(+). Its function is as follows. Reductase involved in lignan biosynthesis. Catalyzes the enantioselective sequential conversion of (+)-pinoresinol into (+)-lariciresinol and of (+)-lariciresinol into (-)-secoisolariciresinol. Abstracts the 4R-hydride from the NADPH cofactor during catalysis. The chain is Bifunctional pinoresinol-lariciresinol reductase from Thuja plicata (Western red-cedar).